The sequence spans 341 residues: Phosphate acyltransferase (341 aa).

Belongs to the PlsX family. Homodimer. Probably interacts with PlsY.

Its subcellular location is the cytoplasm. The catalysed reaction is a fatty acyl-[ACP] + phosphate = an acyl phosphate + holo-[ACP]. It participates in lipid metabolism; phospholipid metabolism. In terms of biological role, catalyzes the reversible formation of acyl-phosphate (acyl-PO(4)) from acyl-[acyl-carrier-protein] (acyl-ACP). This enzyme utilizes acyl-ACP as fatty acyl donor, but not acyl-CoA. The sequence is that of Phosphate acyltransferase from Vibrio parahaemolyticus serotype O3:K6 (strain RIMD 2210633).